A 115-amino-acid chain; its full sequence is Integration host factor subunit alpha (115 aa).

Belongs to the bacterial histone-like protein family. In terms of assembly, heterodimer of an alpha and a beta chain.

In terms of biological role, this protein is one of the two subunits of integration host factor, a specific DNA-binding protein that functions in genetic recombination as well as in transcriptional and translational control. In Burkholderia pseudomallei (strain K96243), this protein is Integration host factor subunit alpha.